Consider the following 283-residue polypeptide: MFS-type transporter eupM (283 aa).

7 helical membrane-spanning segments follow: residues 68–88 (LVAW…WGAM), 111–131 (IAWI…VAGP), 136–156 (GGFK…YMML), 165–185 (VLLA…TPMI), 196–216 (IGLA…VYPI), 227–247 (FAWT…IPII), and 263–283 (LIDL…ATMI).

This sequence belongs to the major facilitator superfamily. Monocarboxylate porter (TC 2.A.1.13) family.

The protein localises to the membrane. In terms of biological role, MFS-type transporter; part of the gene cluster that mediates the biosynthesis of eupenifeldin, a bistropolone meroterpenoid that acts as an antitumor agent. This Phoma sp protein is MFS-type transporter eupM.